Here is a 154-residue protein sequence, read N- to C-terminus: Myoglobin (154 aa).

Residues 2–148 (VLTDAEWHLV…FRKDIAAKYK (147 aa)) form the Globin domain. Residue His-65 participates in nitrite binding. His-65 is a binding site for O2. Phosphothreonine is present on Thr-68. His-94 is a binding site for heme b.

It belongs to the globin family. As to quaternary structure, monomeric.

The protein localises to the cytoplasm. It is found in the sarcoplasm. The enzyme catalyses Fe(III)-heme b-[protein] + nitric oxide + H2O = Fe(II)-heme b-[protein] + nitrite + 2 H(+). The catalysed reaction is H2O2 + AH2 = A + 2 H2O. Its function is as follows. Monomeric heme protein which primary function is to store oxygen and facilitate its diffusion within muscle tissues. Reversibly binds oxygen through a pentacoordinated heme iron and enables its timely and efficient release as needed during periods of heightened demand. Depending on the oxidative conditions of tissues and cells, and in addition to its ability to bind oxygen, it also has a nitrite reductase activity whereby it regulates the production of bioactive nitric oxide. Under stress conditions, like hypoxia and anoxia, it also protects cells against reactive oxygen species thanks to its pseudoperoxidase activity. This is Myoglobin (MB) from Balaenoptera physalus (Fin whale).